The sequence spans 216 residues: Ras-related protein Rab-11A (216 aa).

Gly-2 carries the N-acetylglycine modification. GTP contacts are provided by Ser-20, Gly-21, Val-22, Gly-23, Lys-24, Ser-25, Asn-26, Asn-37, Leu-38, Ser-40, Ser-42, and Thr-43. Ser-25 serves as a coordination point for Mg(2+). The short motif at 36-47 is the Switch 1 element; it reads FNLESKSTIGVE. Residues Thr-43 and Asp-66 each contribute to the Mg(2+) site. Positions 67–86 match the Switch 2 motif; the sequence is TAGQERYRAITSAYYRGAVG. Gly-69, Asn-124, Lys-125, Asp-127, Ala-155, and Leu-156 together coordinate GTP. The tract at residues 183–207 is disordered; sequence DRRENDMSPSNNVVPIHVPPTTENK. Residues Cys-212 and Cys-213 are each lipidated (S-geranylgeranyl cysteine). Position 213 is a cysteine methyl ester (Cys-213). A propeptide spans 214–216 (removed in mature form); it reads QNI.

This sequence belongs to the small GTPase superfamily. Rab family. In terms of assembly, interacts (GTP-bound form) with RAB11FIPs (via their C-termini) including RAB11FIP1, RAB11FIP2, RAB11FIP3, RAB11FIP4 and RAB11FIP5 effectors. Forms a complex with RAB11FIP3 and dynein intermediate chain DYNC1LI1; the interaction between RAB11A1 and RAB11FIP3 is direct; the complex regulates endocytic trafficking. Interacts with EVI5; EVI5 and RAB11FIP3 may be mutually exclusive and compete for binding RAB11A. Interacts with SGSM1, SGSM2, SGSM3 and VIPAS39. Interacts with EXOC6 in a GTP-dependent manner. Interacts with RAB11FIP5. Interacts with STXBP6. Interacts (GDP-bound form) with ZFYVE27. Interacts with BIRC6/bruce. May interact with TBC1D14. Interacts with UNC119; in a cell cycle-dependent manner. GDP-bound and nucleotide-free forms interact with SH3BP5. Interacts (GDP-bound form) with KIF5A in a ZFYVE27-dependent manner. Interacts (GDP-bound form) with RELCH. Found in a complex composed of RELCH, OSBP1 and RAB11A. Interacts with TBC1D12. Interacts with DEF6. Interacts with ATP9A. Forms a heterotetramer with RAB11FIP3; the GTP-bound form is preferred for binding. Forms a complex with Rabin8/RAB3IP and RAB11FIP3, probably a heterohexamer with two of each protein subunit, where Rabin8/RAB3IP and RAB11FIP3 simultaneously bind to RAB11A; the complex promotes preciliary trafficking and cilia growth. Forms a complex containing RAB11A, ASAP1, Rabin8/RAB3IP, RAP11FIP3 and ARF4; the complex promotes preciliary trafficking; the complex binds to RHO in photoreceptor cells and promotes RHO ciliary transport. Interacts (GTP-bound form) with WDR44; the interaction prevents RAB11A-RAB3IP-RAB11FIP3 complex formation. Mg(2+) serves as cofactor.

It is found in the cell membrane. Its subcellular location is the endosome membrane. The protein localises to the recycling endosome membrane. The protein resides in the cleavage furrow. It localises to the cytoplasmic vesicle. It is found in the phagosome. Its subcellular location is the cytoplasmic vesicle membrane. The protein localises to the golgi apparatus. The protein resides in the trans-Golgi network. The enzyme catalyses GTP + H2O = GDP + phosphate + H(+). With respect to regulation, regulated by guanine nucleotide exchange factors (GEFs) which promote the exchange of bound GDP for free GTP. Regulated by GTPase activating proteins (GAPs) which increase the GTP hydrolysis activity. Inhibited by GDP dissociation inhibitors (GDIs) which prevent Rab-GDP dissociation. Its function is as follows. The small GTPases Rab are key regulators of intracellular membrane trafficking, from the formation of transport vesicles to their fusion with membranes. Rabs cycle between an inactive GDP-bound form and an active GTP-bound form that is able to recruit to membranes different set of downstream effectors directly responsible for vesicle formation, movement, tethering and fusion. The small Rab GTPase RAB11A regulates endocytic recycling. Forms a functional Rab11/RAB11FIP3/dynein complex that regulates the movement of peripheral sorting endosomes (SE) along microtubule tracks toward the microtubule organizing center/centrosome, generating the endosomal recycling compartment (ERC). Acts as a major regulator of membrane delivery during cytokinesis. Together with MYO5B and RAB8A participates in epithelial cell polarization. Together with Rabin8/RAB3IP, RAB8A, the exocyst complex, PARD3, PRKCI, ANXA2, CDC42 and DNMBP promotes transcytosis of PODXL to the apical membrane initiation sites (AMIS), apical surface formation and lumenogenesis. Together with MYO5B participates in CFTR trafficking to the plasma membrane and TF (Transferrin) recycling in nonpolarized cells. Required in a complex with MYO5B and RAB11FIP2 for the transport of NPC1L1 to the plasma membrane. Participates in the sorting and basolateral transport of CDH1 from the Golgi apparatus to the plasma membrane. Regulates the recycling of FCGRT (receptor of Fc region of monomeric IgG) to basolateral membranes. May also play a role in melanosome transport and release from melanocytes. Promotes Rabin8/RAB3IP preciliary vesicular trafficking to mother centriole by forming a ciliary targeting complex containing Rab11, ASAP1, Rabin8/RAB3IP, RAB11FIP3 and ARF4, thereby regulating ciliogenesis initiation. On the contrary, upon LPAR1 receptor signaling pathway activation, interaction with phosphorylated WDR44 prevents Rab11-RAB3IP-RAB11FIP3 complex formation and cilia growth. Participates in the export of a subset of neosynthesized proteins through a Rab8-Rab10-Rab11-endososomal dependent export route via interaction with WDR44. The polypeptide is Ras-related protein Rab-11A (Bos taurus (Bovine)).